The sequence spans 333 residues: Photosystem II assembly protein Ycf48 (333 aa).

An N-terminal signal peptide occupies residues 1–25; the sequence is MRVKMFKPLRLVLLIAVSVLLMAAR.

This sequence belongs to the Ycf48 family. In terms of assembly, part of early PSII assembly complexes which includes D1 (psbA) and PsbI; not found in mature PSII. Binds to the lumenal side of PSII complexes. Interacts with YidC.

Its subcellular location is the cellular thylakoid lumen. A factor required for optimal assembly of photosystem II (PSII), acting in the early stages of PSII assembly. Also plays a role in replacement of photodamaged D1 (psbA). Assists YidC in synthesis of chlorophyll-binding proteins. The polypeptide is Photosystem II assembly protein Ycf48 (Synechococcus sp. (strain JA-2-3B'a(2-13)) (Cyanobacteria bacterium Yellowstone B-Prime)).